The primary structure comprises 389 residues: Chalcone synthase 1A (389 aa).

Cysteine 164 is an active-site residue.

It belongs to the thiolase-like superfamily. Chalcone/stilbene synthases family.

It catalyses the reaction (E)-4-coumaroyl-CoA + 3 malonyl-CoA + 3 H(+) = 2',4,4',6'-tetrahydroxychalcone + 3 CO2 + 4 CoA. It functions in the pathway secondary metabolite biosynthesis; flavonoid biosynthesis. Functionally, the primary product of this enzyme is 4,2',4',6'-tetrahydroxychalcone (also termed naringenin-chalcone or chalcone) which can under specific conditions spontaneously isomerize into naringenin. This chain is Chalcone synthase 1A (CHS1A), found in Solanum tuberosum (Potato).